The sequence spans 640 residues: Chaperone protein HtpG (640 aa).

The tract at residues M1–R352 is a; substrate-binding. Residues E353 to R571 are b. The c stretch occupies residues M572–K640.

Belongs to the heat shock protein 90 family. As to quaternary structure, homodimer.

Its subcellular location is the cytoplasm. Molecular chaperone. Has ATPase activity. The polypeptide is Chaperone protein HtpG (Acinetobacter baylyi (strain ATCC 33305 / BD413 / ADP1)).